Here is a 146-residue protein sequence, read N- to C-terminus: UPF0310 protein YdcG (146 aa).

Belongs to the UPF0310 family.

This chain is UPF0310 protein YdcG (ydcG), found in Bacillus subtilis (strain 168).